Consider the following 78-residue polypeptide: Sec-independent protein translocase protein TatA (78 aa).

Residues Met1–Gly21 traverse the membrane as a helical segment. The segment at Asp46–Ala78 is disordered. Positions Thr52–Thr62 are enriched in basic and acidic residues. The span at Thr63–Ala78 shows a compositional bias: low complexity.

This sequence belongs to the TatA/E family. As to quaternary structure, the Tat system comprises two distinct complexes: a TatABC complex, containing multiple copies of TatA, TatB and TatC subunits, and a separate TatA complex, containing only TatA subunits. Substrates initially bind to the TatABC complex, which probably triggers association of the separate TatA complex to form the active translocon.

It is found in the cell inner membrane. Part of the twin-arginine translocation (Tat) system that transports large folded proteins containing a characteristic twin-arginine motif in their signal peptide across membranes. TatA could form the protein-conducting channel of the Tat system. The sequence is that of Sec-independent protein translocase protein TatA from Nitratiruptor sp. (strain SB155-2).